Consider the following 122-residue polypeptide: Photosystem II extrinsic protein U (122 aa).

A signal peptide spans 1–30 (MRWLLSILVRVVLVLCLCFAPLGIPVVARA).

It belongs to the PsbU family. As to quaternary structure, PSII is composed of 1 copy each of membrane proteins PsbA, PsbB, PsbC, PsbD, PsbE, PsbF, PsbH, PsbI, PsbJ, PsbK, PsbL, PsbM, PsbT, PsbX, PsbY, PsbZ, Psb30/Ycf12, peripheral proteins PsbO, CyanoQ (PsbQ), PsbU, PsbV and a large number of cofactors. It forms dimeric complexes.

Its subcellular location is the cellular thylakoid membrane. Functionally, one of the extrinsic, lumenal subunits of photosystem II (PSII). PSII is a light-driven water plastoquinone oxidoreductase, using light energy to abstract electrons from H(2)O, generating a proton gradient subsequently used for ATP formation. The extrinsic proteins stabilize the structure of photosystem II oxygen-evolving complex (OEC), the ion environment of oxygen evolution and protect the OEC against heat-induced inactivation. The protein is Photosystem II extrinsic protein U of Synechococcus sp. (strain JA-2-3B'a(2-13)) (Cyanobacteria bacterium Yellowstone B-Prime).